The primary structure comprises 1290 residues: Alpha-factor-transporting ATPase (1290 aa).

Residues 1–25 are Cytoplasmic-facing; that stretch reads MNFLSFKTTKHYHIFRYVNIRNDYR. The helical transmembrane segment at 26 to 46 threads the bilayer; the sequence is LLMIMIIGTVATGLVPAITSI. Residues 27-319 enclose the ABC transmembrane type-1 1 domain; the sequence is LMIMIIGTVA…TLHQIVVLQK (293 aa). The Extracellular segment spans residues 47–75; the sequence is LTGRVFDLLSVFVANGSHQGLYSQLVQRS. Asn-61 carries an N-linked (GlcNAc...) asparagine glycan. A helical membrane pass occupies residues 76 to 96; sequence MAVMALGAASVPVMWLSLTSW. The Cytoplasmic segment spans residues 97-150; sequence MHIGERQGFRIRSQILEAYLEEKPMEWYDNNEKLLGDFTQINRCVEELRSSSAE. Residues 151-171 traverse the membrane as a helical segment; that stretch reads ASAITFQNLVAICALLGTSFY. Residues 172-173 are Extracellular-facing; sequence YS. A helical membrane pass occupies residues 174 to 194; it reads WSLTLIILCSSPIITFFAVVF. At 195–262 the chain is on the cytoplasmic side; sequence SRMIHVYSEK…SCFFVAANAG (68 aa). The helical transmembrane segment at 263–283 threads the bilayer; the sequence is ILRFLTLTMFVQGFWFGSAMI. Residues 284–296 lie on the Extracellular side of the membrane; that stretch reads KKGKLNINDVITC. A helical membrane pass occupies residues 297-317; that stretch reads FHSCIMLGSTLNNTLHQIVVL. The Cytoplasmic segment spans residues 318-715; sequence QKGGVAMEKI…RMIKSIRYKK (398 aa). In terms of domain architecture, ABC transporter 1 spans 357 to 603; the sequence is LTFANVSFSY…PTTTFSTWYH (247 aa). 392 to 399 is an ATP binding site; sequence GKSGSGKS. The chain crosses the membrane as a helical span at residues 716-736; that stretch reads ILILGLLCSLIAGATNPVFSY. One can recognise an ABC transmembrane type-1 2 domain in the interval 717-1007; it reads LILGLLCSLI…LVSQIPDISR (291 aa). Residues 737–763 are Extracellular-facing; the sequence is TFSFLLEGIVPSTDGKTGSSHYLAKWS. The helical transmembrane segment at 764–784 threads the bilayer; sequence LLVLGVAAADGIFNFAKGFLL. Residues 785–838 are Cytoplasmic-facing; the sequence is DCCSEYWVMDLRNEVMEKLTRKNMDWFSGENNKASEISALVLNDLRDLRSLVSE. A helical transmembrane segment spans residues 839 to 859; the sequence is FLSAMTSFVTVSTIGLIWALV. The Extracellular segment spans residues 860–865; the sequence is SGWKLS. The helical transmembrane segment at 866-886 threads the bilayer; sequence LVCISMFPLIIIFSAIYGGIL. Over 887–945 the chain is Cytoplasmic; the sequence is QKCETDYKTSVAQLENCLYQIVTNIKTIKCLQAEFHFQLTYHDLKIKMQQIASKRAIAT. The helical transmembrane segment at 946–966 threads the bilayer; it reads GFGISMTNMIVMCIQAIIYYY. Residues 967 to 981 lie on the Extracellular side of the membrane; the sequence is GLKLVMIHEYTSKEM. The chain crosses the membrane as a helical span at residues 982–1002; sequence FTTFTLLLFTIMSCTSLVSQI. Residues 1003-1290 lie on the Cytoplasmic side of the membrane; the sequence is PDISRGQRAA…LFQIVSNQSS (288 aa). A Glycyl lysine isopeptide (Lys-Gly) (interchain with G-Cter in ubiquitin) cross-link involves residue Lys-1022. In terms of domain architecture, ABC transporter 2 spans 1052 to 1287; the sequence is VSIQNLTFAY…RGELFQIVSN (236 aa). 1087-1094 contacts ATP; sequence GESGTGKS.

Belongs to the ABC transporter superfamily. Alpha-factor sex pheromone exporter (TC 3.A.1.206) family. In terms of processing, degraded via the ubiquitin system.

Its subcellular location is the membrane. The enzyme catalyses an [alpha-factor](in) + ATP + H2O = an [alpha-factor](out) + ADP + phosphate + H(+). In terms of biological role, STE6 is required in yeast MATA cells for production of A-factor pheromone. STE6 is involved in the transport of the farnesyl-derivation of the A-factor pheromone. This is Alpha-factor-transporting ATPase (STE6) from Saccharomyces cerevisiae (strain ATCC 204508 / S288c) (Baker's yeast).